We begin with the raw amino-acid sequence, 787 residues long: Endonuclease MutS2 (787 aa).

Residue 331-338 (GPNTGGKT) participates in ATP binding. Positions 711-786 (IDVRGKTSDD…EQGVTVVELK (76 aa)) constitute a Smr domain.

It belongs to the DNA mismatch repair MutS family. MutS2 subfamily. Homodimer. Binds to stalled ribosomes, contacting rRNA.

Endonuclease that is involved in the suppression of homologous recombination and thus may have a key role in the control of bacterial genetic diversity. Its function is as follows. Acts as a ribosome collision sensor, splitting the ribosome into its 2 subunits. Detects stalled/collided 70S ribosomes which it binds and splits by an ATP-hydrolysis driven conformational change. Acts upstream of the ribosome quality control system (RQC), a ribosome-associated complex that mediates the extraction of incompletely synthesized nascent chains from stalled ribosomes and their subsequent degradation. Probably generates substrates for RQC. In Caldicellulosiruptor bescii (strain ATCC BAA-1888 / DSM 6725 / KCTC 15123 / Z-1320) (Anaerocellum thermophilum), this protein is Endonuclease MutS2.